We begin with the raw amino-acid sequence, 381 residues long: Chaperone protein DnaJ (381 aa).

The J domain occupies 5–73; that stretch reads DYYEVLGVGK…EKKAAYDQYG (69 aa). Residues 141–219 form a CR-type zinc finger; the sequence is GHEAQIRVPH…CHGQGKLKSQ (79 aa). Residues Cys154, Cys157, Cys171, Cys174, Cys193, Cys196, Cys207, and Cys210 each coordinate Zn(2+). CXXCXGXG motif repeat units lie at residues 154–161, 171–178, 193–200, and 207–214; these read CDHCHGNG, CPTCHGAG, CPKCHGSG, and CTKCHGQG. The interval 357 to 381 is disordered; the sequence is SVHEGGSRHSPQEQSWLDKVKSFFS.

It belongs to the DnaJ family. In terms of assembly, homodimer. Requires Zn(2+) as cofactor.

It is found in the cytoplasm. In terms of biological role, participates actively in the response to hyperosmotic and heat shock by preventing the aggregation of stress-denatured proteins and by disaggregating proteins, also in an autonomous, DnaK-independent fashion. Unfolded proteins bind initially to DnaJ; upon interaction with the DnaJ-bound protein, DnaK hydrolyzes its bound ATP, resulting in the formation of a stable complex. GrpE releases ADP from DnaK; ATP binding to DnaK triggers the release of the substrate protein, thus completing the reaction cycle. Several rounds of ATP-dependent interactions between DnaJ, DnaK and GrpE are required for fully efficient folding. Also involved, together with DnaK and GrpE, in the DNA replication of plasmids through activation of initiation proteins. This chain is Chaperone protein DnaJ, found in Cupriavidus necator (strain ATCC 17699 / DSM 428 / KCTC 22496 / NCIMB 10442 / H16 / Stanier 337) (Ralstonia eutropha).